A 189-amino-acid chain; its full sequence is uncharacterized protein (189 aa).

A signal peptide spans 1-23 (MVPPKPALWALLLALLGTAPSRA). N72 is a glycosylation site (N-linked (GlcNAc...) asparagine).

This is an uncharacterized protein from Homo sapiens (Human).